The primary structure comprises 274 residues: NH(3)-dependent NAD(+) synthetase (274 aa).

ATP is bound at residue 46–53; sequence GISGGQDS. Asp-52 is a binding site for Mg(2+). Residue Arg-140 participates in deamido-NAD(+) binding. Thr-160 provides a ligand contact to ATP. Position 165 (Glu-165) interacts with Mg(2+). Residues Lys-173 and Asp-180 each contribute to the deamido-NAD(+) site. Residues Lys-189 and Thr-211 each coordinate ATP. Residue 260 to 261 participates in deamido-NAD(+) binding; the sequence is HK.

The protein belongs to the NAD synthetase family. In terms of assembly, homodimer.

It catalyses the reaction deamido-NAD(+) + NH4(+) + ATP = AMP + diphosphate + NAD(+) + H(+). The protein operates within cofactor biosynthesis; NAD(+) biosynthesis; NAD(+) from deamido-NAD(+) (ammonia route): step 1/1. Functionally, catalyzes the ATP-dependent amidation of deamido-NAD to form NAD. Uses ammonia as a nitrogen source. This is NH(3)-dependent NAD(+) synthetase from Lysinibacillus sphaericus (strain C3-41).